The primary structure comprises 1726 residues: Transcription elongation factor SPT6 (1726 aa).

3 stretches are compositionally biased toward acidic residues: residues 1–14, 32–49, and 59–80; these read MSDF…ESEE, EEED…DDQD, and NDDD…DSED. Positions 1 to 197 are disordered; the sequence is MSDFVESEAE…DDGQPLKKPK (197 aa). At S2 the chain carries N-acetylserine. The interval 2–485 is interaction with IWS1; the sequence is SDFVESEAEE…PKMQNAAKAS (484 aa). An interaction with PAAF1 region spans residues 2–916; it reads SDFVESEAEE…PPVLRQAVSL (915 aa). Residues 3–51 adopt a coiled-coil conformation; sequence DFVESEAEESEEEYNHEGEVVPRVTKKFVEEEDDDEEEEEENLDDQDER. 2 positions are modified to phosphoserine: S7 and S12. 3 positions are modified to phosphoserine: S73, S78, and S91. The segment covering 95-105 has biased composition (acidic residues); the sequence is RLEDDDFDLIE. A compositionally biased stretch (basic residues) spans 111–122; sequence KVKRGQKYRRVK. S125 carries the post-translational modification Phosphoserine. Acidic residues-rich tracts occupy residues 126–136, 150–160, and 169–190; these read DDDEDDEEEYG, FQDEEGEEGQE, and PDEE…DDDG. Phosphoserine is present on S267. An interaction with KDM6A region spans residues 317–1300; sequence ADWIYRNAFA…NEWKLPKDTY (984 aa). The disordered stretch occupies residues 489-520; that stretch reads LKRIKEDGDEEGEGEEAEDEEQRGPELKQASR. Positions 495 to 509 are enriched in acidic residues; that stretch reads DGDEEGEGEEAEDEE. Residues 510 to 520 are compositionally biased toward basic and acidic residues; that stretch reads QRGPELKQASR. At K743 the chain carries N6-acetyllysine. The S1 motif domain maps to 1213-1282; sequence WNHFDSGSCP…EKFSADLTCR (70 aa). One can recognise an SH2 domain in the interval 1325–1431; the sequence is YIKRVIAHPS…FARDLLNHKY (107 aa). Residue Y1515 is modified to Phosphotyrosine. T1523 is modified (phosphothreonine). S1526 is modified (phosphoserine). A phosphothreonine mark is found at T1530 and T1532. S1535 carries the post-translational modification Phosphoserine. T1539 carries the post-translational modification Phosphothreonine. Positions 1633-1726 are interaction with histone H2B and H3; the sequence is PQYHQLQAST…ATPLLDEMDR (94 aa). The tract at residues 1636-1726 is disordered; it reads HQLQASTTPQ…ATPLLDEMDR (91 aa). Low complexity predominate over residues 1639 to 1664; that stretch reads QASTTPQSTQAQPQPSSSSRQRQQQP. K1676 carries the N6-acetyllysine modification. T1697 is modified (phosphothreonine). Residues S1701 and S1703 each carry the phosphoserine modification. A phosphothreonine mark is found at T1709 and T1718.

Belongs to the SPT6 family. In terms of assembly, interacts with RNA polymerase II and the DRB sensitivity-inducing factor complex (DSIF complex), which is composed of SUPT5H and SUPT4H1 or SUPT4H2. Interacts with PAAF1. Interacts with histone H2B and H3. Interacts (via SH2 domain) with POLR2A phosphorylated at 'Ser-2'. Interacts (via SH2 domain) with SETD1A. Interacts with IWS1, KDM6A and AICDA. Interacts with WDR43. In terms of processing, dephosphorylated at Ser-1530 by the PNUTS-PP1 complex during RNA polymerase II transcription pause-release. In terms of tissue distribution, ubiquitously expressed.

Its subcellular location is the nucleus. In terms of biological role, histone H3-H4 chaperone that plays a key role in the regulation of transcription elongation and mRNA processing. Enhances the transcription elongation by RNA polymerase II (RNAPII) and is also required for the efficient activation of transcriptional elongation by the HIV-1 nuclear transcriptional activator, Tat. Besides chaperoning histones in transcription, acts to transport and splice mRNA by forming a complex with IWS1 and the C-terminal domain (CTD) of the RNAPII subunit RPB1 (POLR2A). The SUPT6H:IWS1:CTD complex recruits mRNA export factors (ALYREF/THOC4, EXOSC10) as well as histone modifying enzymes (such as SETD2), to ensure proper mRNA splicing, efficient mRNA export and elongation-coupled H3K36 methylation, a signature chromatin mark of active transcription. SUPT6H via its association with SETD1A, regulates both class-switch recombination and somatic hypermutation through formation of H3K4me3 epigenetic marks on activation-induced cytidine deaminase (AICDA) target loci. Promotes the activation of the myogenic gene program by entailing erasure of the repressive H3K27me3 epigenetic mark through stabilization of the chromatin interaction of the H3K27 demethylase KDM6A. In Mus musculus (Mouse), this protein is Transcription elongation factor SPT6 (Supt6h).